The following is a 166-amino-acid chain: Transcription factor HES-5 (166 aa).

In terms of domain architecture, bHLH spans 16-72 (KNRLRKPVVEKMRRDRINSSIEQLKLLLEQEFARHQPNSKLEKADILEMAVSYLKHS). One can recognise an Orange domain in the interval 88–119 (YSEGYSWCLQEAVQFLTLHAASDTQMKLLYHF). The segment at 125 to 144 (APAAPAKEPKAPGAAPPPAL) is disordered. A WRPW motif motif is present at residues 163-166 (WRPW).

Transcription repression requires formation of a complex with a corepressor protein of the Groucho/TLE family. In terms of tissue distribution, expressed in fetal heart and brain tumors.

It localises to the nucleus. Transcriptional repressor of genes that require a bHLH protein for their transcription. Plays an important role as neurogenesis negative regulator. The chain is Transcription factor HES-5 (HES5) from Homo sapiens (Human).